Consider the following 117-residue polypeptide: Class I hydrophobin 2 (117 aa).

A signal peptide spans 1–21 (EIVSLSLSLLAVVPLVVLVIA). Cystine bridges form between C35-C96, C42-C90, C43-C76, and C97-C110.

This sequence belongs to the fungal hydrophobin family. As to quaternary structure, self-assembles to form functional amyloid fibrils called rodlets. Self-assembly into fibrillar rodlets occurs spontaneously at hydrophobic:hydrophilic interfaces and the rodlets further associate laterally to form amphipathic monolayers.

It is found in the secreted. Its subcellular location is the cell wall. In terms of biological role, aerial growth, conidiation, and dispersal of filamentous fungi in the environment rely upon a capability of their secreting small amphipathic proteins called hydrophobins (HPBs) with low sequence identity. Class I can self-assemble into an outermost layer of rodlet bundles on aerial cell surfaces, conferring cellular hydrophobicity that supports fungal growth, development and dispersal; whereas Class II form highly ordered films at water-air interfaces through intermolecular interactions but contribute nothing to the rodlet structure. The protein is Class I hydrophobin 2 of Pisolithus tinctorius (Dead man's foot).